The chain runs to 336 residues: tRNA N6-adenosine threonylcarbamoyltransferase (336 aa).

Fe cation-binding residues include histidine 111 and histidine 115. Substrate is bound by residues 134–138 (LVSGG), aspartate 167, glycine 180, and asparagine 270. Position 298 (aspartate 298) interacts with Fe cation.

This sequence belongs to the KAE1 / TsaD family. It depends on Fe(2+) as a cofactor.

It is found in the cytoplasm. The catalysed reaction is L-threonylcarbamoyladenylate + adenosine(37) in tRNA = N(6)-L-threonylcarbamoyladenosine(37) in tRNA + AMP + H(+). Its function is as follows. Required for the formation of a threonylcarbamoyl group on adenosine at position 37 (t(6)A37) in tRNAs that read codons beginning with adenine. Is involved in the transfer of the threonylcarbamoyl moiety of threonylcarbamoyl-AMP (TC-AMP) to the N6 group of A37, together with TsaE and TsaB. TsaD likely plays a direct catalytic role in this reaction. The sequence is that of tRNA N6-adenosine threonylcarbamoyltransferase from Acinetobacter baumannii (strain SDF).